The following is a 402-amino-acid chain: Putative F-box protein At3g20030 (402 aa).

Positions 1–56 (MTMMSDLSQDLLEEILSRVPRTSLGAVRSTCKRWNTLFKDRILCKAEETRDQFRFI) constitute an F-box domain.

In Arabidopsis thaliana (Mouse-ear cress), this protein is Putative F-box protein At3g20030.